The following is a 270-amino-acid chain: uncharacterized protein (270 aa).

Positions 1 to 22 are cleaved as a signal peptide; that stretch reads MEYIKKLLCTMSVLLLIIFIGG. Cysteine 23 carries the N-palmitoyl cysteine lipid modification. A lipid anchor (S-diacylglycerol cysteine) is attached at cysteine 23.

Belongs to the staphylococcal tandem lipoprotein family.

The protein localises to the cell membrane. This is an uncharacterized protein from Staphylococcus aureus (strain bovine RF122 / ET3-1).